Here is a 350-residue protein sequence, read N- to C-terminus: Arabinogalactan endo-beta-1,4-galactanase A (350 aa).

Positions 1–17 (MILSSLLPLSLVTLTSA) are cleaved as a signal peptide. N-linked (GlcNAc...) asparagine glycosylation is present at N129. E153 functions as the Proton donor in the catalytic mechanism. E263 acts as the Nucleophile in catalysis.

It belongs to the glycosyl hydrolase 53 family.

Its subcellular location is the secreted. The catalysed reaction is The enzyme specifically hydrolyzes (1-&gt;4)-beta-D-galactosidic linkages in type I arabinogalactans.. Its function is as follows. Endogalactanase involved in the degradation of plant cell wall polysaccharides, and more particularly of hairy regions of pectin. This is Arabinogalactan endo-beta-1,4-galactanase A (galA) from Emericella nidulans (strain FGSC A4 / ATCC 38163 / CBS 112.46 / NRRL 194 / M139) (Aspergillus nidulans).